We begin with the raw amino-acid sequence, 44 residues long: Cytochrome b559 subunit beta (44 aa).

The chain crosses the membrane as a helical span at residues 19–35; sequence WLAVHTLGVPTVFFLGA. His23 provides a ligand contact to heme.

It belongs to the PsbE/PsbF family. Heterodimer of an alpha subunit and a beta subunit. PSII is composed of 1 copy each of membrane proteins PsbA, PsbB, PsbC, PsbD, PsbE, PsbF, PsbH, PsbI, PsbJ, PsbK, PsbL, PsbM, PsbT, PsbX, PsbY, PsbZ, Psb30/Ycf12, peripheral proteins PsbO, CyanoQ (PsbQ), PsbU, PsbV and a large number of cofactors. It forms dimeric complexes. It depends on heme b as a cofactor.

The protein resides in the cellular thylakoid membrane. This b-type cytochrome is tightly associated with the reaction center of photosystem II (PSII). PSII is a light-driven water:plastoquinone oxidoreductase that uses light energy to abstract electrons from H(2)O, generating O(2) and a proton gradient subsequently used for ATP formation. It consists of a core antenna complex that captures photons, and an electron transfer chain that converts photonic excitation into a charge separation. This Trichodesmium erythraeum (strain IMS101) protein is Cytochrome b559 subunit beta.